Here is a 171-residue protein sequence, read N- to C-terminus: MATKMAGAAMNLAKRESSSLCGKLETDIEIKASAGKFHHMFAGRPHHVSKATPGKIQGCELHEGDWGKVGSIVFWNYVHDGEAKVAKERIEAVEPEKNLITFRVIEGDLLKEYKSFVITIQVTPKRGGPGSVVHWHVEYEKIDDKVAHPETFLDFCVEVSKEIDEHLLNEE.

This sequence belongs to the MLP family.

The polypeptide is MLP-like protein 31 (MLP31) (Arabidopsis thaliana (Mouse-ear cress)).